The sequence spans 180 residues: NADH-quinone oxidoreductase subunit I (180 aa).

4Fe-4S ferredoxin-type domains are found at residues 50 to 80 and 90 to 119; these read LTRD…LQKA and EFFR…LTPD. 8 residues coordinate [4Fe-4S] cluster: Cys60, Cys63, Cys66, Cys70, Cys99, Cys102, Cys105, and Cys109.

This sequence belongs to the complex I 23 kDa subunit family. NDH-1 is composed of 13 different subunits. Subunits NuoA, H, J, K, L, M, N constitute the membrane sector of the complex. [4Fe-4S] cluster serves as cofactor.

The protein resides in the cell inner membrane. It catalyses the reaction a quinone + NADH + 5 H(+)(in) = a quinol + NAD(+) + 4 H(+)(out). NDH-1 shuttles electrons from NADH, via FMN and iron-sulfur (Fe-S) centers, to quinones in the respiratory chain. The immediate electron acceptor for the enzyme in this species is believed to be ubiquinone. Couples the redox reaction to proton translocation (for every two electrons transferred, four hydrogen ions are translocated across the cytoplasmic membrane), and thus conserves the redox energy in a proton gradient. This Shigella boydii serotype 4 (strain Sb227) protein is NADH-quinone oxidoreductase subunit I.